The chain runs to 215 residues: Small ribosomal subunit protein uS7 (215 aa).

It belongs to the universal ribosomal protein uS7 family. Part of the 30S ribosomal subunit.

In terms of biological role, one of the primary rRNA binding proteins, it binds directly to 16S rRNA where it nucleates assembly of the head domain of the 30S subunit. Is located at the subunit interface close to the decoding center. The sequence is that of Small ribosomal subunit protein uS7 from Thermococcus onnurineus (strain NA1).